Reading from the N-terminus, the 578-residue chain is Lysine--tRNA ligase (578 aa).

Glu-414 and Glu-421 together coordinate Mg(2+).

The protein belongs to the class-II aminoacyl-tRNA synthetase family. Homodimer. Mg(2+) is required as a cofactor.

The protein resides in the cytoplasm. The enzyme catalyses tRNA(Lys) + L-lysine + ATP = L-lysyl-tRNA(Lys) + AMP + diphosphate. This is Lysine--tRNA ligase from Porphyromonas gingivalis (strain ATCC 33277 / DSM 20709 / CIP 103683 / JCM 12257 / NCTC 11834 / 2561).